The following is a 1218-amino-acid chain: Protein STICHEL (1218 aa).

A disordered region spans residues 24 to 136 (AGRVLRDPGT…SDARNGGDSY (113 aa)). 3 stretches are compositionally biased toward polar residues: residues 32 to 46 (GTTSSWKSPLDSSRS), 54 to 73 (ASRNGGSSSQFPIRGESSTN), and 86 to 95 (WKTQKSSSEK). The Bipartite nuclear localization signal signature appears at 163–180 (RKSNVGSCKKKSKKKISS). 2 short sequence motifs (PEST) span residues 273–304 (RNPSTVGSWDGTTTSVNDGDDELDDNLDLPGR) and 425–449 (RSQDGLEAVALDGEEEEGSTPETIR). Residue 490–497 (GPRGTGKT) coordinates ATP. Positions 509, 518, 521, and 524 each coordinate Zn(2+). The stretch at 762 to 788 (EADMEGLKHALKLLSEAEKQLRVSNDR) forms a coiled coil. A disordered region spans residues 802–828 (MPSPGTTHTGSSRRQSSRATDDDPASV). Residues 804–819 (SPGTTHTGSSRRQSSR) show a composition bias toward polar residues. 2 consecutive short sequence motifs (bipartite nuclear localization signal) follow at residues 1178 to 1195 (RRSKSKQVKGTPVRSRRN) and 1196 to 1213 (RKSRFSLFNGCAKPRKAE).

This sequence belongs to the DnaX/STICHEL family. As to quaternary structure, interacts with BLT. In terms of tissue distribution, ubiquitous.

It is found in the nucleus. Acts as a key regulator of trichome branching through an endoreduplication-independent pathway. This Arabidopsis thaliana (Mouse-ear cress) protein is Protein STICHEL (STI).